A 368-amino-acid chain; its full sequence is Histidinol dehydrogenase (368 aa).

Substrate-binding residues include threonine 197, glutamine 218, and histidine 221. Zn(2+)-binding residues include glutamine 218 and histidine 221. Active-site proton acceptor residues include glutamate 276 and histidine 277. Residues histidine 277, aspartate 306, glutamate 358, and histidine 363 each coordinate substrate. Aspartate 306 serves as a coordination point for Zn(2+). Histidine 363 is a Zn(2+) binding site.

The protein belongs to the histidinol dehydrogenase family. Zn(2+) serves as cofactor.

The enzyme catalyses L-histidinol + 2 NAD(+) + H2O = L-histidine + 2 NADH + 3 H(+). It participates in amino-acid biosynthesis; L-histidine biosynthesis; L-histidine from 5-phospho-alpha-D-ribose 1-diphosphate: step 9/9. Catalyzes the sequential NAD-dependent oxidations of L-histidinol to L-histidinaldehyde and then to L-histidine. The protein is Histidinol dehydrogenase of Pyrobaculum aerophilum (strain ATCC 51768 / DSM 7523 / JCM 9630 / CIP 104966 / NBRC 100827 / IM2).